The following is a 114-amino-acid chain: Mobility group protein 1A (114 aa).

The HMG box DNA-binding region spans 5–71 (PKRPLSAYML…EYEKAMKEFE (67 aa)). A disordered region spans residues 69–114 (EFERNGGDKSSGASTKKRGKAAEKKKPAKKSKKKDSEDDEEEDESD). The segment covering 105 to 114 (EDDEEEDESD) has biased composition (acidic residues).

Belongs to the HMGB family.

The protein localises to the nucleus. Its subcellular location is the chromosome. Its function is as follows. Found in condensed chromomeres. Binds preferentially to AT-rich DNA. In Chironomus tentans (Midge), this protein is Mobility group protein 1A (HMG1A).